A 268-amino-acid chain; its full sequence is Phosphonates import ATP-binding protein PhnC (268 aa).

The 244-residue stretch at L11–E254 folds into the ABC transporter domain. An ATP-binding site is contributed by G43–S50.

Belongs to the ABC transporter superfamily. Phosphonates importer (TC 3.A.1.9.1) family. In terms of assembly, the complex is composed of two ATP-binding proteins (PhnC), two transmembrane proteins (PhnE) and a solute-binding protein (PhnD).

The protein resides in the cell membrane. It catalyses the reaction phosphonate(out) + ATP + H2O = phosphonate(in) + ADP + phosphate + H(+). In terms of biological role, part of the ABC transporter complex PhnCDE involved in phosphonates import. Responsible for energy coupling to the transport system. The chain is Phosphonates import ATP-binding protein PhnC from Nocardia farcinica (strain IFM 10152).